We begin with the raw amino-acid sequence, 188 residues long: dCTP deaminase (188 aa).

Residues 111–116 (KSTYAR), 135–137 (TLE), Gln-156, Tyr-170, Lys-179, and Gln-180 each bind dCTP. The active-site Proton donor/acceptor is the Glu-137.

This sequence belongs to the dCTP deaminase family. In terms of assembly, homotrimer.

It catalyses the reaction dCTP + H2O + H(+) = dUTP + NH4(+). It functions in the pathway pyrimidine metabolism; dUMP biosynthesis; dUMP from dCTP (dUTP route): step 1/2. Functionally, catalyzes the deamination of dCTP to dUTP. The sequence is that of dCTP deaminase from Orientia tsutsugamushi (strain Boryong) (Rickettsia tsutsugamushi).